We begin with the raw amino-acid sequence, 553 residues long: CDP-diacylglycerol--glycerol-3-phosphate 3-phosphatidyltransferase, mitochondrial (553 aa).

Residues 1–25 (MAAPAAGPVFWRRLLGLLPGRPGLA) constitute a mitochondrion transit peptide. Phosphoserine is present on Ser46. 121 to 128 (ASLYLGTG) contacts ATP. PLD phosphodiesterase domains lie at 212–238 (TIGLQHIKVYLFDNNVVLSGANLSDSY) and 457–490 (TGWTFHAKGLWLYLAGSSLPCLTLIGSPNFGYRS). Catalysis depends on residues His217, Lys219, and Asp224.

The protein belongs to the CDP-alcohol phosphatidyltransferase class-II family.

It localises to the mitochondrion. It carries out the reaction a CDP-1,2-diacyl-sn-glycerol + sn-glycerol 3-phosphate = a 1,2-diacyl-sn-glycero-3-phospho-(1'-sn-glycero-3'-phosphate) + CMP + H(+). It functions in the pathway phospholipid metabolism; phosphatidylglycerol biosynthesis; phosphatidylglycerol from CDP-diacylglycerol: step 1/2. Activated by calcium and magnesium and inhibited by other bivalent cations. In terms of biological role, functions in the biosynthesis of the anionic phospholipids phosphatidylglycerol and cardiolipin. The protein is CDP-diacylglycerol--glycerol-3-phosphate 3-phosphatidyltransferase, mitochondrial (PGS1) of Cricetulus griseus (Chinese hamster).